A 322-amino-acid polypeptide reads, in one-letter code: Gluconeogenesis factor (322 aa).

The protein belongs to the gluconeogenesis factor family.

It localises to the cytoplasm. Its function is as follows. Required for morphogenesis under gluconeogenic growth conditions. This is Gluconeogenesis factor from Listeria innocua serovar 6a (strain ATCC BAA-680 / CLIP 11262).